The sequence spans 184 residues: UPF0149 protein PP_5201 (184 aa).

Belongs to the UPF0149 family.

The protein is UPF0149 protein PP_5201 of Pseudomonas putida (strain ATCC 47054 / DSM 6125 / CFBP 8728 / NCIMB 11950 / KT2440).